Consider the following 64-residue polypeptide: Alpha-conotoxin-like Lp1.7 (64 aa).

Positions Met-1 to Ser-21 are cleaved as a signal peptide. A propeptide spanning residues Phe-22–Arg-41 is cleaved from the precursor. Intrachain disulfides connect Cys-47-Cys-53 and Cys-48-Cys-61. The tract at residues Asp-49–Pro-51 is lacks the Ser-Xaa-Pro motif that is crucial for potent interaction with nAChR.

This sequence belongs to the conotoxin A superfamily. In terms of tissue distribution, expressed by the venom duct.

Its subcellular location is the secreted. Functionally, alpha-conotoxins act on postsynaptic membranes, they bind to the nicotinic acetylcholine receptors (nAChR) and thus inhibit them. Has possibly a distinct nAChR binding mode from other alpha-conotoxins, due to a different three residue motif (lacks the Ser-Xaa-Pro motif). The sequence is that of Alpha-conotoxin-like Lp1.7 from Conus leopardus (Leopard cone).